A 236-amino-acid polypeptide reads, in one-letter code: Mammalian ependymin-related protein 1 (236 aa).

The first 35 residues, 1 to 35, serve as a signal peptide directing secretion; it reads MPRRAPLRVARGSLDAWLLGGLWVCALGCLCGVGM. Intrachain disulfides connect C54–C184, C100–C234, and C125–C222. N-linked (GlcNAc...) asparagine glycans are attached at residues N142 and N194.

Belongs to the ependymin family. As to quaternary structure, homodimer. N-glycosylated; the glycan contains mannose-6-phosphate moieties.

It localises to the lysosome lumen. The protein resides in the secreted. Its function is as follows. Binds anionic lipids and gangliosides at acidic pH. The sequence is that of Mammalian ependymin-related protein 1 (EPDR1) from Bos taurus (Bovine).